The chain runs to 264 residues: Endoglucanase S (264 aa).

The first 32 residues, 1–32 (MQTVNTQPHRIFRVLLPAVFSSLLLSSLTVSA), serve as a signal peptide directing secretion.

Belongs to the glycosyl hydrolase 12 (cellulase H) family.

The catalysed reaction is Endohydrolysis of (1-&gt;4)-beta-D-glucosidic linkages in cellulose, lichenin and cereal beta-D-glucans.. This is Endoglucanase S (celS) from Pectobacterium parmentieri.